Reading from the N-terminus, the 44-residue chain is Small ribosomal subunit protein eS31 (44 aa).

The Zn(2+) site is built by Cys-18, Cys-21, Cys-35, and Cys-38. The C4-type zinc-finger motif lies at 18-38 (CPRCGDTVLAEHEDRQHCGKC).

It belongs to the eukaryotic ribosomal protein eS31 family. In terms of assembly, part of the 30S ribosomal subunit. It depends on Zn(2+) as a cofactor.

In Haloarcula marismortui (strain ATCC 43049 / DSM 3752 / JCM 8966 / VKM B-1809) (Halobacterium marismortui), this protein is Small ribosomal subunit protein eS31.